We begin with the raw amino-acid sequence, 471 residues long: Glutamate--tRNA ligase (471 aa).

The 'HIGH' region motif lies at 9–19; the sequence is PSPTGYLHVGG. Residues Cys98, Cys100, Cys125, and His127 each contribute to the Zn(2+) site. Residues 237–241 carry the 'KMSKS' region motif; the sequence is KLSKR. Lys240 contacts ATP.

It belongs to the class-I aminoacyl-tRNA synthetase family. Glutamate--tRNA ligase type 1 subfamily. As to quaternary structure, monomer. It depends on Zn(2+) as a cofactor.

It is found in the cytoplasm. It catalyses the reaction tRNA(Glu) + L-glutamate + ATP = L-glutamyl-tRNA(Glu) + AMP + diphosphate. Catalyzes the attachment of glutamate to tRNA(Glu) in a two-step reaction: glutamate is first activated by ATP to form Glu-AMP and then transferred to the acceptor end of tRNA(Glu). This chain is Glutamate--tRNA ligase, found in Shigella boydii serotype 4 (strain Sb227).